The primary structure comprises 146 residues: Peptide methionine sulfoxide reductase MsrB (146 aa).

One can recognise a MsrB domain in the interval 2–125; sequence LKKNKDELND…NSAAVQFIPY (124 aa). Cys114 (nucleophile) is an active-site residue.

Belongs to the MsrB Met sulfoxide reductase family.

The catalysed reaction is L-methionyl-[protein] + [thioredoxin]-disulfide + H2O = L-methionyl-(R)-S-oxide-[protein] + [thioredoxin]-dithiol. The chain is Peptide methionine sulfoxide reductase MsrB from Staphylococcus carnosus (strain TM300).